A 468-amino-acid chain; its full sequence is UDP-glycosyltransferase 89B2 (468 aa).

Residues S287, 347-348 (WV), 365-373 (HCGWNSVME), and 387-390 (SADQ) each bind UDP-alpha-D-glucose.

The protein belongs to the UDP-glycosyltransferase family.

In terms of biological role, may glycosylate diterpenes or flavonols in leaves. This is UDP-glycosyltransferase 89B2 from Stevia rebaudiana (Stevia).